The following is a 282-amino-acid chain: NADPH-dependent 7-cyano-7-deazaguanine reductase (282 aa).

88 to 90 (IES) lines the substrate pocket. 90-91 (SK) contributes to the NADPH binding site. The Thioimide intermediate role is filled by Cys190. The active-site Proton donor is the Asp197. 229-230 (HE) contributes to the substrate binding site. NADPH is bound at residue 258 to 259 (RG).

Belongs to the GTP cyclohydrolase I family. QueF type 2 subfamily. Homodimer.

The protein resides in the cytoplasm. The catalysed reaction is 7-aminomethyl-7-carbaguanine + 2 NADP(+) = 7-cyano-7-deazaguanine + 2 NADPH + 3 H(+). It participates in tRNA modification; tRNA-queuosine biosynthesis. Functionally, catalyzes the NADPH-dependent reduction of 7-cyano-7-deazaguanine (preQ0) to 7-aminomethyl-7-deazaguanine (preQ1). The chain is NADPH-dependent 7-cyano-7-deazaguanine reductase from Salmonella paratyphi C (strain RKS4594).